Here is a 519-residue protein sequence, read N- to C-terminus: Sugar transport protein MST5 (519 aa).

The Cytoplasmic segment spans residues 1–18 (MAGGAMVQTVGGKTYPGK). The helical transmembrane segment at 19-39 (MTAFVFFTCLVASSGGLIFGY) threads the bilayer. Topologically, residues 40–80 (DIGISGGVTSMDSFLSEFFPSVYAQAKASKDTNQYCKFDSQ) are extracellular. The chain crosses the membrane as a helical span at residues 81-101 (LLTLFTSSLYLAALATSFVAA). At 102 to 110 (WVTRVFGRK) the chain is on the cytoplasmic side. A helical transmembrane segment spans residues 111 to 127 (WSMFCGGVTFLAGSALN). Residue Gly-128 is a topological domain, extracellular. The chain crosses the membrane as a helical span at residues 129-149 (AATDVMMLILGRILLGIGVGF). The Cytoplasmic portion of the chain corresponds to 150–167 (ANQSVPLYLSEMAPANLR). Residues 168-188 (GMLNIGFQLMTTIGILSANLI) traverse the membrane as a helical segment. Over 189 to 202 (NYATSSIEGGWGWR) the chain is Extracellular. A helical membrane pass occupies residues 203-223 (IGLGLAGVPALIITLGALVLP). Topologically, residues 224–295 (DTPNSLIARG…IAILIPCFQQ (72 aa)) are cytoplasmic. The helical transmembrane segment at 296–316 (LTGINVIMFYAPVLFLTIGFA) threads the bilayer. The Extracellular portion of the chain corresponds to 317-321 (GDASL). The chain crosses the membrane as a helical span at residues 322-342 (MSAVITGLVNMFATVVSIISV). The Cytoplasmic portion of the chain corresponds to 343–357 (DRLGRRVLFLQGGTQ). Residues 358–378 (MFISQVVVGTLIALQFGVAGV) form a helical membrane-spanning segment. Residues 379–386 (GEMSRSYA) are Extracellular-facing. The helical transmembrane segment at 387–407 (ILLVLFICMYVAGFAWSWGPL) threads the bilayer. Over 408–426 (GWLVPSEVFALEIRSAGQS) the chain is Cytoplasmic. A helical membrane pass occupies residues 427-447 (IAVCVNMMLTFVIGQAFLTML). Topologically, residues 448-451 (CHLK) are extracellular. A helical membrane pass occupies residues 452-472 (FGLFYFFAGWMLVMTTFVALF). Residues 473 to 519 (LPETKGVPIEEMNHVWSRHWFWGSYVTAHDVAGAGAGGGGNRRSHNV) are Cytoplasmic-facing.

Belongs to the major facilitator superfamily. Sugar transporter (TC 2.A.1.1) family. As to expression, expressed in panicles before heading. Expressed in flowers before pollination.

It is found in the membrane. In terms of biological role, mediates active uptake of hexoses by sugar:proton symport. Can transport glucose, xylose and 3-O-methylglucose. May play a role at the early stage of seed development. The protein is Sugar transport protein MST5 of Oryza sativa subsp. japonica (Rice).